Consider the following 133-residue polypeptide: Large ribosomal subunit protein bL19 (133 aa).

The interval 114-133 is disordered; that stretch reads IAERQMTAASKEEPAEKSEA. Residues 123-133 are compositionally biased toward basic and acidic residues; the sequence is SKEEPAEKSEA.

Belongs to the bacterial ribosomal protein bL19 family.

Its function is as follows. This protein is located at the 30S-50S ribosomal subunit interface and may play a role in the structure and function of the aminoacyl-tRNA binding site. The polypeptide is Large ribosomal subunit protein bL19 (Phenylobacterium zucineum (strain HLK1)).